Consider the following 191-residue polypeptide: MIFMKNSTEYPTLVEIKDKKGEMIEKGEAKLRDLNNIRVKLNELRTSNPDDLDTIAQLEEEESHLTSEVLKLDLSIKILEVVEYIIESNIFEDYWKIIEEKIPYEELLNIVVENGLSIKKTCMELYKLANIDDKNILKKIQNLPDDYPKETKEDPNLQNKYLSKIISRISRLKEFKSNLDEIVSDIISNMR.

This is an uncharacterized protein from Methanocaldococcus jannaschii (strain ATCC 43067 / DSM 2661 / JAL-1 / JCM 10045 / NBRC 100440) (Methanococcus jannaschii).